A 394-amino-acid polypeptide reads, in one-letter code: 1-acylglycerol-3-phosphate O-acyltransferase ICT1 (394 aa).

One can recognise an AB hydrolase-1 domain in the interval 74-381 (VLIHGYAASS…AGHNLFLDNP (308 aa)). Residues 374–379 (HNLFLD) carry the HXXXXD motif motif.

Belongs to the peptidase S33 family. ABHD4/ABHD5 subfamily.

It catalyses the reaction a 1-acyl-sn-glycero-3-phosphate + an acyl-CoA = a 1,2-diacyl-sn-glycero-3-phosphate + CoA. Functionally, lysophosphatidic acid acyltransferase involved in membrane remodeling leading to increased organic solvent tolerance. Involved in resistance to azoles and copper. The chain is 1-acylglycerol-3-phosphate O-acyltransferase ICT1 (ICT1) from Saccharomyces cerevisiae (strain ATCC 204508 / S288c) (Baker's yeast).